The following is a 484-amino-acid chain: Protein nucleotidyltransferase YdiU (484 aa).

8 residues coordinate ATP: G81, G83, R84, K103, D115, G116, R166, and R173. D244 acts as the Proton acceptor in catalysis. 2 residues coordinate Mg(2+): N245 and D254. D254 is an ATP binding site.

The protein belongs to the SELO family. The cofactor is Mg(2+). Mn(2+) serves as cofactor.

The enzyme catalyses L-seryl-[protein] + ATP = 3-O-(5'-adenylyl)-L-seryl-[protein] + diphosphate. The catalysed reaction is L-threonyl-[protein] + ATP = 3-O-(5'-adenylyl)-L-threonyl-[protein] + diphosphate. It carries out the reaction L-tyrosyl-[protein] + ATP = O-(5'-adenylyl)-L-tyrosyl-[protein] + diphosphate. It catalyses the reaction L-histidyl-[protein] + UTP = N(tele)-(5'-uridylyl)-L-histidyl-[protein] + diphosphate. The enzyme catalyses L-seryl-[protein] + UTP = O-(5'-uridylyl)-L-seryl-[protein] + diphosphate. The catalysed reaction is L-tyrosyl-[protein] + UTP = O-(5'-uridylyl)-L-tyrosyl-[protein] + diphosphate. Nucleotidyltransferase involved in the post-translational modification of proteins. It can catalyze the addition of adenosine monophosphate (AMP) or uridine monophosphate (UMP) to a protein, resulting in modifications known as AMPylation and UMPylation. This Shewanella baltica (strain OS155 / ATCC BAA-1091) protein is Protein nucleotidyltransferase YdiU.